Reading from the N-terminus, the 729-residue chain is Fatty acid oxidation complex subunit alpha (729 aa).

The interval 1–189 (MLYKGDTLYL…KIGLVDGVVK (189 aa)) is enoyl-CoA hydratase/isomerase. A substrate-binding site is contributed by Asp-296. The segment at 311 to 729 (ETPKQAAVLG…ARPVGSLKTA (419 aa)) is 3-hydroxyacyl-CoA dehydrogenase. NAD(+)-binding positions include Met-324, Asp-343, 400-402 (VVE), Lys-407, and Ser-429. The For 3-hydroxyacyl-CoA dehydrogenase activity role is filled by His-450. Residue Asn-453 participates in NAD(+) binding. Substrate is bound by residues Asn-500 and Tyr-660. The interval 708 to 729 (RHNEPYYPPVEPARPVGSLKTA) is disordered.

The protein in the N-terminal section; belongs to the enoyl-CoA hydratase/isomerase family. This sequence in the C-terminal section; belongs to the 3-hydroxyacyl-CoA dehydrogenase family. Heterotetramer of two alpha chains (FadB) and two beta chains (FadA).

It carries out the reaction a (3S)-3-hydroxyacyl-CoA + NAD(+) = a 3-oxoacyl-CoA + NADH + H(+). The enzyme catalyses a (3S)-3-hydroxyacyl-CoA = a (2E)-enoyl-CoA + H2O. It catalyses the reaction a 4-saturated-(3S)-3-hydroxyacyl-CoA = a (3E)-enoyl-CoA + H2O. The catalysed reaction is (3S)-3-hydroxybutanoyl-CoA = (3R)-3-hydroxybutanoyl-CoA. It carries out the reaction a (3Z)-enoyl-CoA = a 4-saturated (2E)-enoyl-CoA. The enzyme catalyses a (3E)-enoyl-CoA = a 4-saturated (2E)-enoyl-CoA. It functions in the pathway lipid metabolism; fatty acid beta-oxidation. Its function is as follows. Involved in the aerobic and anaerobic degradation of long-chain fatty acids via beta-oxidation cycle. Catalyzes the formation of 3-oxoacyl-CoA from enoyl-CoA via L-3-hydroxyacyl-CoA. It can also use D-3-hydroxyacyl-CoA and cis-3-enoyl-CoA as substrate. In Salmonella gallinarum (strain 287/91 / NCTC 13346), this protein is Fatty acid oxidation complex subunit alpha.